The sequence spans 512 residues: NADH-quinone oxidoreductase subunit N (512 aa).

The next 14 helical transmembrane spans lie at 32–52 (VLPA…SVLF), 57–77 (FIIV…AVFY), 97–117 (VLSF…AAIV), 126–146 (IEFP…TLMT), 151–171 (FILV…LIGM), 186–206 (FLLG…LFGG), 231–251 (IGLV…PYHA), 264–284 (VTGY…LILY), 296–316 (WAWL…LLAL), 324–344 (MLAY…SAGI), 348–368 (VLFY…ILAY), 392–412 (AIAI…GGFW), 431–451 (ILLI…LRIG), and 473–493 (VGVT…WFLL).

This sequence belongs to the complex I subunit 2 family. As to quaternary structure, NDH-1 is composed of 14 different subunits. Subunits NuoA, H, J, K, L, M, N constitute the membrane sector of the complex.

The protein resides in the cell inner membrane. The enzyme catalyses a quinone + NADH + 5 H(+)(in) = a quinol + NAD(+) + 4 H(+)(out). NDH-1 shuttles electrons from NADH, via FMN and iron-sulfur (Fe-S) centers, to quinones in the respiratory chain. The immediate electron acceptor for the enzyme in this species is believed to be ubiquinone. Couples the redox reaction to proton translocation (for every two electrons transferred, four hydrogen ions are translocated across the cytoplasmic membrane), and thus conserves the redox energy in a proton gradient. This Leptospira interrogans serogroup Icterohaemorrhagiae serovar Lai (strain 56601) protein is NADH-quinone oxidoreductase subunit N.